Here is a 423-residue protein sequence, read N- to C-terminus: MDSGVWAACIFCLLSSLPVALGHVHPECDFITQLREDERTCLQAADRMANSSSGCPRTWDGLLCWPTAGPGEWVTLPCPAFFSHFSSEPGALKRDCTTTGWSEPFPPYPEACPVPLELLTDEKSYFSTVRIVYTTGHSVSAVALFVAIAILVALRRLHCPRNYIHSQLFATFILKAGAVFLKDAALFHSENTDHCSFSTVLCKVSVATSHFATMTNFSWLLAEAVYLTCLLASTSPSTRRAFWWLVLAGWGLPLLFTGTWVGCKLAFEDVACWDLDDSSPYWWIIKGPIVLSVGVNFGLFLNIIRILLRKLEPAQGSLHTQPQYWRLSKSTLLLIPLFGIHYVIFNFLPDSAGLGIRLPLELGLGSFQGFIVAILYCFLNQEVRTEISRRWHGHDPELLPAWRTHAKWAKPSRSRAKVLTTVC.

An N-terminal signal peptide occupies residues 1-22; that stretch reads MDSGVWAACIFCLLSSLPVALG. The Extracellular segment spans residues 23–130; the sequence is HVHPECDFIT…DEKSYFSTVR (108 aa). 3 disulfides stabilise this stretch: Cys-41-Cys-64, Cys-55-Cys-96, and Cys-78-Cys-112. Asn-50 carries an N-linked (GlcNAc...) asparagine glycan. Residues 131–151 form a helical membrane-spanning segment; it reads IVYTTGHSVSAVALFVAIAIL. The Cytoplasmic segment spans residues 152–167; the sequence is VALRRLHCPRNYIHSQ. A helical transmembrane segment spans residues 168–188; the sequence is LFATFILKAGAVFLKDAALFH. The Extracellular segment spans residues 189–210; the sequence is SENTDHCSFSTVLCKVSVATSH. The helical transmembrane segment at 211–231 threads the bilayer; the sequence is FATMTNFSWLLAEAVYLTCLL. Over 232 to 240 the chain is Cytoplasmic; it reads ASTSPSTRR. The chain crosses the membrane as a helical span at residues 241–261; the sequence is AFWWLVLAGWGLPLLFTGTWV. At 262–283 the chain is on the extracellular side; it reads GCKLAFEDVACWDLDDSSPYWW. Residues 284-304 form a helical membrane-spanning segment; sequence IIKGPIVLSVGVNFGLFLNII. Topologically, residues 305 to 331 are cytoplasmic; the sequence is RILLRKLEPAQGSLHTQPQYWRLSKST. A helical transmembrane segment spans residues 332-352; sequence LLLIPLFGIHYVIFNFLPDSA. The Extracellular segment spans residues 353 to 357; that stretch reads GLGIR. The helical transmembrane segment at 358–378 threads the bilayer; sequence LPLELGLGSFQGFIVAILYCF. Residues 379–423 are Cytoplasmic-facing; sequence LNQEVRTEISRRWHGHDPELLPAWRTHAKWAKPSRSRAKVLTTVC.

This sequence belongs to the G-protein coupled receptor 2 family. As to expression, pituitary gland. Also detected in the lymphocytes and thymocytes.

It localises to the cell membrane. In terms of biological role, receptor for GRF, coupled to G proteins which activate adenylyl cyclase. Stimulates somatotroph cell growth, growth hormone gene transcription and growth hormone secretion. The polypeptide is Growth hormone-releasing hormone receptor (GHRHR) (Sus scrofa (Pig)).